The sequence spans 343 residues: Ubiquitin thioesterase OTU1 (343 aa).

The tract at residues 45–123 (RCKAKGGTHV…IVEEDQTRPK (79 aa)) is UBX-like. The 126-residue stretch at 144–269 (LTRTAVPADN…GIHYDPLQRN (126 aa)) folds into the OTU domain. A cys-loop region spans residues 149-155 (VPADNSC). D152 is a catalytic residue. The Nucleophile role is filled by C155. The tract at residues 208 to 218 (IRRDDTWGGAI) is variable-loop. Residues 258 to 262 (YDGIH) form a his-loop region. I261 is a binding site for substrate. H262 is a catalytic residue. An S2 site region spans residues 286 to 291 (DIVLVQ). A C2H2-type zinc finger spans residues 313-337 (LRCMLCQKGLTGQAEARDHARETGH). H337 is an active-site residue.

Interacts with VCP; the interaction is direct. Interacts with FAF2/UBXD8. Interacts with DERL1; however interaction is dependent on the UBAX-like region, suggesting that it may be indirect. Interacts with PLAA, UBXN6 and VCP; may form a complex involved in macroautophagy.

Its subcellular location is the cytoplasm. The catalysed reaction is Thiol-dependent hydrolysis of ester, thioester, amide, peptide and isopeptide bonds formed by the C-terminal Gly of ubiquitin (a 76-residue protein attached to proteins as an intracellular targeting signal).. In terms of biological role, hydrolase that can remove conjugated ubiquitin from proteins and participates in endoplasmic reticulum-associated degradation (ERAD) for misfolded lumenal proteins. May act by triming the ubiquitin chain on the associated substrate to facilitate their threading through the VCP/p97 pore. Ubiquitin moieties on substrates may present a steric impediment to the threading process when the substrate is transferred to the VCP pore and threaded through VCP's axial channel. Mediates deubiquitination of 'Lys-27'-, 'Lys-29'- and 'Lys-33'-linked polyubiquitin chains. Also able to hydrolyze 'Lys-11'-linked ubiquitin chains. Cleaves both polyubiquitin and di-ubiquitin. May play a role in macroautophagy, regulating for instance the clearance of damaged lysosomes. May recruit PLAA, UBXN6 and VCP to damaged lysosome membranes decorated with K48-linked ubiquitin chains and remove these chains allowing autophagosome formation. The sequence is that of Ubiquitin thioesterase OTU1 (Yod1) from Rattus norvegicus (Rat).